Consider the following 956-residue polypeptide: MILEERSSWEGSKRYCIKTKHVAIICAVVVAVGLIVGLSVGLTRSCDSTEGMTQGTTQGTTQAPSHLPPVTSPPEDQGVCPASEDESGGWKDFRLPDFIKPVHYDLEVKPLMEQDTYTGSVDISINVSSSTRYLWLHLRETRITRLPVLRRPSGEQVQVRQCFEYKKQEYVVVEAEEELEPNTGEGPYHLILEFAGWLNGSLVGFYRTTYVEKGQTKSIAATDHEPTDARKSFPCFDEPNKKATYTISIVHSKEYKALSNMPVEKEESVDDIWSRTTFQKSVPMSTYLVCFAVHQFDSVTRISNRGIPLTIYVQPEQKHTAEYAANITKSVFDYFEDYFGMSYSLPKLDKIAIPDFGTGAMENWGLITYRETNLLYDPDESASSNKQRVAAVIAHELVHQWFGNIVTMEWWDDLWLNEGFASFFEYLGVAYAEKDWQMRDQMILDDVLPVQEDDSLMSSHPIVVTVATPDEITSVFDGISYSKGASILRMLENWITREKFQIGCQNYLKKHKFENAKTSDFWAALEEASNLPVKEVMDTWTNQMGYPVLNVDNMKNITQKRFLLDPRANASEPHSAFGYTWNIPIKWTEDDEQRITLYNRSETGGITLESTLSGNAFLKINPDHIGFYRVNYEVSTWEWIATNLSVNHTDFSSADRASFIDDAFALARAQLLNYKEALNLTKYLKEEKEYLPWHRVISAVTYIISMFEDDKELYPVIEKYFRDQVKPIADSLGWNDVGDHLTKLLRASVLGLACKMGDSDALNNASQLFQEWLTGTVSLPVNLRLLVYRYGMQNSGNETSWNYTLEQYQKTSLAQEKEKLLYGLASVKNVTLLSRYLDLLKDSNLIKTQDVFTVIQYISYNSYGKTMAWNWIQLNWEYLVNRYTLNNRNLGRIVTIAEPFNTELQLWQIKSFFERYPEAGAGQKPREQVLETVKNNIEWLKQNRDTIRNWFLDLNG.

Residues 1-21 (MILEERSSWEGSKRYCIKTKH) are Cytoplasmic-facing. A helical; Signal-anchor for type II membrane protein membrane pass occupies residues 22 to 42 (VAIICAVVVAVGLIVGLSVGL). The Extracellular segment spans residues 43–956 (TRSCDSTEGM…IRNWFLDLNG (914 aa)). Residues 48 to 87 (STEGMTQGTTQGTTQAPSHLPPVTSPPEDQGVCPASEDES) form a disordered region. The segment covering 49–62 (TEGMTQGTTQGTTQ) has biased composition (low complexity). N-linked (GlcNAc...) asparagine glycans are attached at residues asparagine 126 and asparagine 199. Glutamate 225 is a binding site for substrate. Asparagine 326 carries N-linked (GlcNAc...) asparagine glycosylation. 359–363 (GAMEN) serves as a coordination point for substrate. Histidine 395 is a Zn(2+) binding site. The Proton acceptor role is filled by glutamate 396. Zn(2+)-binding residues include histidine 399 and glutamate 418. Asparagine 556, asparagine 569, asparagine 599, asparagine 643, asparagine 647, asparagine 679, asparagine 764, asparagine 797, asparagine 802, and asparagine 829 each carry an N-linked (GlcNAc...) asparagine glycan. Arginine 888 provides a ligand contact to substrate.

This sequence belongs to the peptidase M1 family. Homodimer; disulfide-linked. Zn(2+) serves as cofactor.

The protein resides in the cell membrane. The catalysed reaction is Release of N-terminal glutamate (and to a lesser extent aspartate) from a peptide.. Substrate specificity is modulated by calcium which enhances the enzymatic activity for cleavage of acidic residues while reducing its activity with basic residues. Inhibited by aminopeptidase inhibitors amastatin and bestatin. Its function is as follows. Regulates central hypertension through its calcium-modulated preference to cleave N-terminal acidic residues from peptides such as angiotensin II. In Bos taurus (Bovine), this protein is Glutamyl aminopeptidase (ENPEP).